The sequence spans 100 residues: Large ribosomal subunit protein bL21 (100 aa).

The protein belongs to the bacterial ribosomal protein bL21 family. As to quaternary structure, part of the 50S ribosomal subunit. Contacts protein L20.

This protein binds to 23S rRNA in the presence of protein L20. The sequence is that of Large ribosomal subunit protein bL21 from Mycoplasma capricolum subsp. capricolum (strain California kid / ATCC 27343 / NCTC 10154).